Consider the following 201-residue polypeptide: Probable molybdenum cofactor guanylyltransferase (201 aa).

GTP contacts are provided by residues 16–18 (LAG), lysine 28, aspartate 75, and aspartate 107. Aspartate 107 serves as a coordination point for Mg(2+).

It belongs to the MobA family. It depends on Mg(2+) as a cofactor.

It is found in the cytoplasm. It carries out the reaction Mo-molybdopterin + GTP + H(+) = Mo-molybdopterin guanine dinucleotide + diphosphate. Functionally, transfers a GMP moiety from GTP to Mo-molybdopterin (Mo-MPT) cofactor (Moco or molybdenum cofactor) to form Mo-molybdopterin guanine dinucleotide (Mo-MGD) cofactor. This is Probable molybdenum cofactor guanylyltransferase from Mycobacterium bovis (strain ATCC BAA-935 / AF2122/97).